The following is a 274-amino-acid chain: Urease accessory protein UreD 2 (274 aa).

It belongs to the UreD family. As to quaternary structure, ureD, UreF and UreG form a complex that acts as a GTP-hydrolysis-dependent molecular chaperone, activating the urease apoprotein by helping to assemble the nickel containing metallocenter of UreC. The UreE protein probably delivers the nickel.

The protein resides in the cytoplasm. Its function is as follows. Required for maturation of urease via the functional incorporation of the urease nickel metallocenter. The protein is Urease accessory protein UreD 2 of Brucella anthropi (strain ATCC 49188 / DSM 6882 / CCUG 24695 / JCM 21032 / LMG 3331 / NBRC 15819 / NCTC 12168 / Alc 37) (Ochrobactrum anthropi).